Reading from the N-terminus, the 152-residue chain is Transcriptional regulator MraZ (152 aa).

2 consecutive SpoVT-AbrB domains span residues 5–52 and 81–124; these read ATMV…PLPE and ASEC…DEQT.

Belongs to the MraZ family. As to quaternary structure, forms oligomers.

It localises to the cytoplasm. It is found in the nucleoid. In terms of biological role, negatively regulates its own expression and that of the subsequent genes in the proximal part of the division and cell wall (dcw) gene cluster. Acts by binding directly to DNA. May also regulate the expression of genes outside the dcw cluster. This is Transcriptional regulator MraZ from Serratia proteamaculans (strain 568).